Consider the following 315-residue polypeptide: MEARAQSGNGSQPLLQTPRDGGRPRGEPDPRDALTQQVHVLSLDQIRAIRNTNEYTEGPTVVPRPGLKPAPRPSTQHKHERLHGLPEHRQPPRLQHSQVHSSARAPLSRSISTVSSGSRSSTRTSTSSSSSEQRLLGSSFSSGPVADGIIRVQPKSELKPGELKPLSKEDLGLHAYRCEDCGKCKCKECTYPRPLPSDWICDKQCLCSAQNVIDYGTCVCCVKGLFYHCSNDDEDNCADNPCSCSQSHCCTRWSAMGVMSLFLPCLWCYLPAKGCLKLCQGCYDRVNRPGCRCKNSNTVCCKVPTVPRRNFEKPT.

Polar residues predominate over residues 1-15 (MEARAQSGNGSQPLL). The tract at residues 1–140 (MEARAQSGNG…SEQRLLGSSF (140 aa)) is disordered. Over residues 20 to 32 (DGGRPRGEPDPRD) the composition is skewed to basic and acidic residues. The span at 108-140 (SRSISTVSSGSRSSTRTSTSSSSSEQRLLGSSF) shows a compositional bias: low complexity. Residues 118 to 315 (SRSSTRTSTS…VPRRNFEKPT (198 aa)) are required for interaction with CAV1. The SPR domain occupies 177–291 (RCEDCGKCKC…CYDRVNRPGC (115 aa)). The tract at residues 178-315 (CEDCGKCKCK…VPRRNFEKPT (138 aa)) is required for interaction with TESK1.

Belongs to the sprouty family. In terms of assembly, forms heterodimers with SPRY1. Forms a tripartite complex containing GAB1, METTL13 and SPRY2. Within the complex interacts with METTL13. Interacts with RAF1. Interacts (via C-terminus) with TESK1 (via C-terminus); the interaction disrupts SPRY2 interaction with GRB2, potentially via disruption of SPRY2 serine dephosphorylation. Interacts with PPP2R1A/PP2A-A and PPP2CA/PP2A-C; the interaction with PPP2CA/PP2A-C is inhibited by interaction with TESK1, possibly by vesicular sequestration of SPRY2. Inhibition of the interaction with the serine/threonine-protein phosphatase 2A (PP2A) holoenzyme results in loss of PP2A-mediated dephosphorylation, resulting in the loss of SPRY2 interaction with GRB2. Interacts with GRB2. Interacts with CBL/C-CBL; the interaction inhibits CBL-mediated ubiquitination of EGFR. Interacts (via C-terminus) with CAV1 (via C-terminus). Post-translationally, cleaved at Pro-144 by the prolyl endopeptidase FAP (seprase) activity (in vitro).

It is found in the cytoplasm. The protein localises to the cytoskeleton. The protein resides in the cell projection. It localises to the ruffle membrane. Functionally, antagonist of fibroblast growth factor (FGF) pathways via inhibition of FGF-mediated phosphorylation of ERK1/2. Thereby acts as an antagonist of FGF-induced retinal lens fiber differentiation, may inhibit limb bud outgrowth and may negatively modulate respiratory organogenesis. Inhibits TGFB-induced epithelial-to-mesenchymal transition in retinal lens epithelial cells. Inhibits CBL/C-CBL-mediated EGFR ubiquitination. The sequence is that of Protein sprouty homolog 2 (SPRY2) from Pongo abelii (Sumatran orangutan).